Reading from the N-terminus, the 683-residue chain is Stromal interaction molecule 1 (683 aa).

The N-terminal stretch at 1–22 is a signal peptide; that stretch reads MDVCARLALWLLWGLLLHHGQS. Over 23–211 the chain is Extracellular; that stretch reads LSQSHSEKAT…LLTRHNHLKD (189 aa). 2 consecutive EF-hand domains span residues 62–95 and 100–124; these read SFDA…EDLN and TVKH…AWKS. Residues D74, D76, N78, D80, and E85 each coordinate Ca(2+). Residues N129 and N169 are each glycosylated (N-linked (GlcNAc...) asparagine). Positions 130 to 198 constitute an SAM domain; it reads WTVDEVVQWL…QLKALDTVLF (69 aa). The helical transmembrane segment at 212-232 threads the bilayer; it reads FMLVVSIVIGVGGCWFAYIQN. Residues 233-683 lie on the Cytoplasmic side of the membrane; that stretch reads RYSKEHMKKM…LKIFKKPLKK (451 aa). A coiled-coil region spans residues 246-440; the sequence is LEGLHRAEQS…IEILCGFQIV (195 aa). The residue at position 255 (S255) is a Phosphoserine. An SOAR/CAD region spans residues 342–440; sequence PEALQKWLQL…IEILCGFQIV (99 aa). The tract at residues 473-481 is contributes to fast Ca(2+)-dependent inactivation of CRAC channels; the sequence is DDVDDMDEE. Low complexity predominate over residues 488-497; it reads MQSPSLQSSV. A disordered region spans residues 488 to 535; that stretch reads MQSPSLQSSVRQRLTEPQHGLGSQRDLTHSDSESSLHMSDRQRLAPKP. Residue T502 is modified to Phosphothreonine. The residue at position 510 (S510) is a Phosphoserine. A compositionally biased stretch (basic and acidic residues) spans 513-530; it reads DLTHSDSESSLHMSDRQR. The residue at position 515 (T515) is a Phosphothreonine. A phosphoserine mark is found at S517, S519, S521, S522, S565, S573, S606, S616, and S626. A disordered region spans residues 597–683; it reads LSSPALPSGS…LKIFKKPLKK (87 aa). The Microtubule tip localization signal motif lies at 640-643; that stretch reads TRIP. A compositionally biased stretch (acidic residues) spans 653 to 664; sequence EEDNGSIGEETD. S658 bears the Phosphoserine mark. T663 bears the Phosphothreonine mark. A Phosphoserine modification is found at S666. Positions 668 to 683 are enriched in basic residues; sequence GRKKFPLKIFKKPLKK. A required for generation of inwardly rectifying CRAC currents region spans residues 670–683; that stretch reads KKFPLKIFKKPLKK.

As to quaternary structure, monomer in the presence of Ca(2+). It oligomerizes in absence of Ca(2+). Forms homooligomers and heterooligomers with STIM2. Interacts with pore-forming subunits of CRAC channels, ORAI1, ORAI2 and ORAI3; this interaction is potentiated upon Ca(2+) store depletion. Interacts (via the transmembrane region and the SOAR/CAD domain) with SPPL3; the interaction promotes the binding of STIM1 to ORAI1. Interacts with ORAI1. Interacts with MAPRE1; probably required for targeting to the growing microtubule plus ends. Interacts with CRACR2A/EFCAB4B; the interaction is direct and takes place in absence of Ca(2+). Forms a complex with CRACR2A/EFCAB4B and ORAI1 at low concentration of Ca(2+), the complex dissociates at elevated Ca(2+) concentrations. Interacts with SARAF, promoting a slow inactivation of STIM1-dependent SOCE activity, possibly by facilitating the deoligomerization of STIM1. Interacts with EFHB; the interaction takes place upon Ca(2+)-store depletion and inhibits the association with SARAF. Interacts with ASPH. Interacts with SLC35G1; intracellular Ca(2+)-dependent. May interact with ATP1A1, ATP2A2, ATP2B1, ATP2B4, KPNB1 and XPO1; through SLC35G1. Interacts with TMEM203. Interacts with STIMATE, promoting STIM1 conformational switch. Interacts with TMEM178A. Interacts with CASQ1 (via C-terminal end and preferentially with the monomeric form); this interaction increases in response to a depletion of intracellular calcium, decreases both STIM1 aggregation and clustering, interaction of STIM1 with ORAI1 and store-operated Ca(2+) entry (SOCE) activity. Glycosylation is required for cell surface expression. In terms of processing, phosphorylated predominantly on Ser residues.

It localises to the cell membrane. The protein resides in the endoplasmic reticulum membrane. It is found in the sarcoplasmic reticulum. The protein localises to the cytoplasm. Its subcellular location is the cytoskeleton. In terms of biological role, acts as a Ca(2+) sensor that gates two major inward rectifying Ca(2+) channels at the plasma membrane: Ca(2+) release-activated Ca(2+) (CRAC) channels and arachidonate-regulated Ca(2+)-selective (ARC) channels. Plays a role in mediating store-operated Ca(2+) entry (SOCE), a Ca(2+) influx following depletion of intracellular Ca(2+) stores. Upon Ca(2+) depletion, translocates from the endoplasmic reticulum to the plasma membrane where it activates CRAC channel pore-forming subunits ORA1, ORA2 and ORAI3 to generate sustained and oscillatory Ca(2+) entry. Involved in enamel formation. This is Stromal interaction molecule 1 (STIM1) from Bos taurus (Bovine).